The following is a 106-amino-acid chain: Iron-sulfur cluster assembly protein CyaY (106 aa).

Belongs to the frataxin family.

Functionally, involved in iron-sulfur (Fe-S) cluster assembly. May act as a regulator of Fe-S biogenesis. This is Iron-sulfur cluster assembly protein CyaY from Yersinia pseudotuberculosis serotype O:3 (strain YPIII).